Consider the following 204-residue polypeptide: Urease accessory protein UreG (204 aa).

10 to 17 (GPVGAGKT) is a GTP binding site.

It belongs to the SIMIBI class G3E GTPase family. UreG subfamily. As to quaternary structure, homodimer. UreD, UreF and UreG form a complex that acts as a GTP-hydrolysis-dependent molecular chaperone, activating the urease apoprotein by helping to assemble the nickel containing metallocenter of UreC. The UreE protein probably delivers the nickel.

It is found in the cytoplasm. Its function is as follows. Facilitates the functional incorporation of the urease nickel metallocenter. This process requires GTP hydrolysis, probably effectuated by UreG. This chain is Urease accessory protein UreG, found in Bacillus sp. (strain TB-90).